The following is a 1426-amino-acid chain: DNA-directed RNA polymerase subunit beta' (1426 aa).

Zn(2+) contacts are provided by Cys-71, Cys-73, Cys-86, and Cys-89. The Mg(2+) site is built by Asp-461, Asp-463, and Asp-465. The Zn(2+) site is built by Cys-814, Cys-888, Cys-895, and Cys-898. Residues 1392–1426 (ADPIAAAESAIGLGGGEQPATSETGAGGSDPSEEG) are disordered.

This sequence belongs to the RNA polymerase beta' chain family. The RNAP catalytic core consists of 2 alpha, 1 beta, 1 beta' and 1 omega subunit. When a sigma factor is associated with the core the holoenzyme is formed, which can initiate transcription. It depends on Mg(2+) as a cofactor. Zn(2+) serves as cofactor.

The catalysed reaction is RNA(n) + a ribonucleoside 5'-triphosphate = RNA(n+1) + diphosphate. DNA-dependent RNA polymerase catalyzes the transcription of DNA into RNA using the four ribonucleoside triphosphates as substrates. This Alkalilimnicola ehrlichii (strain ATCC BAA-1101 / DSM 17681 / MLHE-1) protein is DNA-directed RNA polymerase subunit beta'.